The chain runs to 66 residues: Potassium channel toxin alpha-KTx 30.1 (66 aa).

Positions 1-24 (MNTGFFFFVIMATGLVLTFDTIHA) are cleaved as a signal peptide. 3 disulfides stabilise this stretch: Cys-30–Cys-50, Cys-36–Cys-55, and Cys-40–Cys-57.

This sequence belongs to the short scorpion toxin superfamily. Potassium channel inhibitor family. Alpha-KTx 30 subfamily. As to expression, expressed by the venom gland.

The protein resides in the secreted. Its function is as follows. inhibits Kv1.3/KCNA3 channel (1 uM of the toxin inhibits currents by 64.1%). This chain is Potassium channel toxin alpha-KTx 30.1, found in Scorpiops margerisonae (Scorpion).